The chain runs to 411 residues: Inhibin beta B chain (411 aa).

The signal sequence occupies residues 1–28; sequence MDGLPGRALGAACLLLLVAGWLGPEAWG. The disordered stretch occupies residues 28-69; the sequence is GSPTPPPSPAAPPPPPPPGAPGGSQDTCTSCGGGGGGFRRPE. Residues 29–296 constitute a propeptide that is removed on maturation; it reads SPTPPPSPAA…GDSRHRIRKR (268 aa). Residues 30–47 are compositionally biased toward pro residues; that stretch reads PTPPPSPAAPPPPPPPGA. The N-linked (GlcNAc...) asparagine glycan is linked to N97. Disulfide bonds link C300–C308, C307–C376, C336–C408, and C340–C410.

Belongs to the TGF-beta family. Dimeric, linked by one or more disulfide bonds. Inhibin B is a dimer of alpha and beta-B. Activin B is a homodimer of beta-B. Activin AB is a dimer of beta-A and beta-B. Interacts with FST and FSTL3. Activin B interacts with BMPR2. As to expression, uterus, testis, ovary, lung, kidney, brain, CJ7 embryonic stem cells, and possibly in liver.

Its subcellular location is the secreted. In terms of biological role, inhibins and activins inhibit and activate, respectively, the secretion of follitropin by the pituitary gland. Inhibins/activins are involved in regulating a number of diverse functions such as hypothalamic and pituitary hormone secretion, gonadal hormone secretion, germ cell development and maturation, erythroid differentiation, insulin secretion, nerve cell survival, embryonic axial development or bone growth, depending on their subunit composition. Inhibins appear to oppose the functions of activins. Its function is as follows. Activin B is a dimer of alpha and beta-B that plays a role in several essential biological processes including embryonic development, stem cell maintenance and differentiation, haematopoiesis, cell proliferation and wound healing. Signals through type I receptor ACVR1C, abundantly expressed in pancreatic beta cells, and type II receptors like ACVR2A. Upon ligand binding, these receptors phosphorylate intracellular signaling mediators SMAD2 and SMAD3, which form a complex with SMAD4, translocate to the nucleus, and regulate gene expression. Plays a crucial role in the induction of hepcidin by inflammation through activation of ACVR1C and subsequent phosphorylation of SMAD1/5/8. Regulates adipocyte lipid metabolism by decreasing non-esterified fatty acids and glycerol release and increases intracellular triglyceride content. Stimulates wound healing by promoting cell migration and hair follicle regeneration through the JNK and ERK signaling pathways downstream of RHOA. Inhibin B is a dimer of alpha and beta-B that plays a crucial role in the regulation of the reproductive system by inhibiting the secretion of follicle-stimulating hormone (FSH) from the anterior pituitary gland. Thereby, maintains reproductive homeostasis in both males and females. Acts as a more potent suppressor of FSH release than inhibin A. Functions as competitive receptor antagonist binding activin type II receptors with high affinity in the presence of the TGF-beta type III coreceptor/TGFBR3L. This is Inhibin beta B chain (Inhbb) from Mus musculus (Mouse).